A 132-amino-acid chain; its full sequence is Small ribosomal subunit protein uS9 (132 aa).

The protein belongs to the universal ribosomal protein uS9 family.

The polypeptide is Small ribosomal subunit protein uS9 (Baumannia cicadellinicola subsp. Homalodisca coagulata).